Consider the following 226-residue polypeptide: Urease accessory protein UreF (226 aa).

This sequence belongs to the UreF family. In terms of assembly, ureD, UreF and UreG form a complex that acts as a GTP-hydrolysis-dependent molecular chaperone, activating the urease apoprotein by helping to assemble the nickel containing metallocenter of UreC. The UreE protein probably delivers the nickel.

Its subcellular location is the cytoplasm. In terms of biological role, required for maturation of urease via the functional incorporation of the urease nickel metallocenter. The sequence is that of Urease accessory protein UreF from Burkholderia lata (strain ATCC 17760 / DSM 23089 / LMG 22485 / NCIMB 9086 / R18194 / 383).